A 398-amino-acid chain; its full sequence is Probable aminomethyltransferase (398 aa).

This sequence belongs to the GcvT family. As to quaternary structure, the glycine cleavage system is composed of four proteins: P, T, L and H.

It carries out the reaction N(6)-[(R)-S(8)-aminomethyldihydrolipoyl]-L-lysyl-[protein] + (6S)-5,6,7,8-tetrahydrofolate = N(6)-[(R)-dihydrolipoyl]-L-lysyl-[protein] + (6R)-5,10-methylene-5,6,7,8-tetrahydrofolate + NH4(+). The glycine cleavage system catalyzes the degradation of glycine. The chain is Probable aminomethyltransferase from Pyrococcus furiosus (strain ATCC 43587 / DSM 3638 / JCM 8422 / Vc1).